A 234-amino-acid chain; its full sequence is Urease accessory protein UreG 1 (234 aa).

The disordered stretch occupies residues 1–29 (MTRTPTGVPMHLGHTHDAPAAVSADATRP). 42–49 (GPVGSGKT) contacts GTP.

It belongs to the SIMIBI class G3E GTPase family. UreG subfamily. As to quaternary structure, homodimer. UreD, UreF and UreG form a complex that acts as a GTP-hydrolysis-dependent molecular chaperone, activating the urease apoprotein by helping to assemble the nickel containing metallocenter of UreC. The UreE protein probably delivers the nickel.

Its subcellular location is the cytoplasm. In terms of biological role, facilitates the functional incorporation of the urease nickel metallocenter. This process requires GTP hydrolysis, probably effectuated by UreG. In Streptomyces griseus subsp. griseus (strain JCM 4626 / CBS 651.72 / NBRC 13350 / KCC S-0626 / ISP 5235), this protein is Urease accessory protein UreG 1.